The following is a 457-amino-acid chain: Siroheme synthase (457 aa).

Residues 1–204 are precorrin-2 dehydrogenase /sirohydrochlorin ferrochelatase; sequence MDHLPIFCQL…ADEKAVNATT (204 aa). NAD(+) contacts are provided by residues 22–23 and 43–44; these read DV and LT. Ser128 is subject to Phosphoserine. The uroporphyrinogen-III C-methyltransferase stretch occupies residues 216 to 457; that stretch reads GEVVLVGAGP…RDKLNWFSNY (242 aa). Pro225 contacts S-adenosyl-L-methionine. The Proton acceptor role is filled by Asp248. Catalysis depends on Lys270, which acts as the Proton donor. S-adenosyl-L-methionine-binding positions include 301 to 303, Ile306, 331 to 332, Met382, and Gly411; these read GGD and TA.

In the N-terminal section; belongs to the precorrin-2 dehydrogenase / sirohydrochlorin ferrochelatase family. This sequence in the C-terminal section; belongs to the precorrin methyltransferase family.

It carries out the reaction uroporphyrinogen III + 2 S-adenosyl-L-methionine = precorrin-2 + 2 S-adenosyl-L-homocysteine + H(+). It catalyses the reaction precorrin-2 + NAD(+) = sirohydrochlorin + NADH + 2 H(+). The enzyme catalyses siroheme + 2 H(+) = sirohydrochlorin + Fe(2+). Its pathway is cofactor biosynthesis; adenosylcobalamin biosynthesis; precorrin-2 from uroporphyrinogen III: step 1/1. The protein operates within cofactor biosynthesis; adenosylcobalamin biosynthesis; sirohydrochlorin from precorrin-2: step 1/1. It participates in porphyrin-containing compound metabolism; siroheme biosynthesis; precorrin-2 from uroporphyrinogen III: step 1/1. It functions in the pathway porphyrin-containing compound metabolism; siroheme biosynthesis; siroheme from sirohydrochlorin: step 1/1. Its pathway is porphyrin-containing compound metabolism; siroheme biosynthesis; sirohydrochlorin from precorrin-2: step 1/1. Its function is as follows. Multifunctional enzyme that catalyzes the SAM-dependent methylations of uroporphyrinogen III at position C-2 and C-7 to form precorrin-2 via precorrin-1. Then it catalyzes the NAD-dependent ring dehydrogenation of precorrin-2 to yield sirohydrochlorin. Finally, it catalyzes the ferrochelation of sirohydrochlorin to yield siroheme. The polypeptide is Siroheme synthase (Salmonella choleraesuis (strain SC-B67)).